A 325-amino-acid polypeptide reads, in one-letter code: Methionyl-tRNA formyltransferase (325 aa).

Position 112–115 (112–115 (SLLP)) interacts with (6S)-5,6,7,8-tetrahydrofolate.

This sequence belongs to the Fmt family.

It carries out the reaction L-methionyl-tRNA(fMet) + (6R)-10-formyltetrahydrofolate = N-formyl-L-methionyl-tRNA(fMet) + (6S)-5,6,7,8-tetrahydrofolate + H(+). Its function is as follows. Attaches a formyl group to the free amino group of methionyl-tRNA(fMet). The formyl group appears to play a dual role in the initiator identity of N-formylmethionyl-tRNA by promoting its recognition by IF2 and preventing the misappropriation of this tRNA by the elongation apparatus. The polypeptide is Methionyl-tRNA formyltransferase (Roseiflexus sp. (strain RS-1)).